Consider the following 262-residue polypeptide: Hydroxyethylthiazole kinase (262 aa).

Methionine 41 serves as a coordination point for substrate. ATP contacts are provided by arginine 117 and serine 163. Glycine 190 contributes to the substrate binding site.

This sequence belongs to the Thz kinase family. The cofactor is Mg(2+).

The enzyme catalyses 5-(2-hydroxyethyl)-4-methylthiazole + ATP = 4-methyl-5-(2-phosphooxyethyl)-thiazole + ADP + H(+). It participates in cofactor biosynthesis; thiamine diphosphate biosynthesis; 4-methyl-5-(2-phosphoethyl)-thiazole from 5-(2-hydroxyethyl)-4-methylthiazole: step 1/1. In terms of biological role, catalyzes the phosphorylation of the hydroxyl group of 4-methyl-5-beta-hydroxyethylthiazole (THZ). The sequence is that of Hydroxyethylthiazole kinase from Levilactobacillus brevis (strain ATCC 367 / BCRC 12310 / CIP 105137 / JCM 1170 / LMG 11437 / NCIMB 947 / NCTC 947) (Lactobacillus brevis).